The sequence spans 230 residues: Flagellar L-ring protein (230 aa).

The signal sequence occupies residues 1–15 (MSRPPLLSSACLAAT). Cysteine 16 carries the N-palmitoyl cysteine lipid modification. Cysteine 16 carries S-diacylglycerol cysteine lipidation.

Belongs to the FlgH family. As to quaternary structure, the basal body constitutes a major portion of the flagellar organelle and consists of four rings (L,P,S, and M) mounted on a central rod.

It localises to the cell outer membrane. The protein resides in the bacterial flagellum basal body. In terms of biological role, assembles around the rod to form the L-ring and probably protects the motor/basal body from shearing forces during rotation. This chain is Flagellar L-ring protein, found in Xanthomonas oryzae pv. oryzae (strain MAFF 311018).